The primary structure comprises 180 residues: Bifunctional protein PyrR (180 aa).

A PRPP-binding motif is present at residues 101–113; it reads VILVDDVLYTGRT.

Belongs to the purine/pyrimidine phosphoribosyltransferase family. PyrR subfamily. As to quaternary structure, homodimer and homohexamer; in equilibrium.

It catalyses the reaction UMP + diphosphate = 5-phospho-alpha-D-ribose 1-diphosphate + uracil. In terms of biological role, regulates transcriptional attenuation of the pyrimidine nucleotide (pyr) operon by binding in a uridine-dependent manner to specific sites on pyr mRNA. This disrupts an antiterminator hairpin in the RNA and favors formation of a downstream transcription terminator, leading to a reduced expression of downstream genes. Also displays a weak uracil phosphoribosyltransferase activity which is not physiologically significant. The polypeptide is Bifunctional protein PyrR (Bacillus cereus (strain ATCC 14579 / DSM 31 / CCUG 7414 / JCM 2152 / NBRC 15305 / NCIMB 9373 / NCTC 2599 / NRRL B-3711)).